The chain runs to 536 residues: UDP-N-acetylmuramate--L-alanine ligase (536 aa).

Residue 133–139 (GSSGKTT) participates in ATP binding.

Belongs to the MurCDEF family.

It is found in the cytoplasm. It carries out the reaction UDP-N-acetyl-alpha-D-muramate + L-alanine + ATP = UDP-N-acetyl-alpha-D-muramoyl-L-alanine + ADP + phosphate + H(+). It participates in cell wall biogenesis; peptidoglycan biosynthesis. Cell wall formation. The sequence is that of UDP-N-acetylmuramate--L-alanine ligase from Wolbachia sp. subsp. Brugia malayi (strain TRS).